A 426-amino-acid polypeptide reads, in one-letter code: Mitochondrial distribution and morphology protein 12 (426 aa).

An SMP-LTD domain is found at 1–426; the sequence is MSIEVDWKTA…VFPSFWTFLI (426 aa). 3 disordered regions span residues 88–147, 185–264, and 346–370; these read AHGN…GTPG, WTDH…FRFP, and ADDQ…SPKR. Positions 96-109 are enriched in basic and acidic residues; the sequence is THSELNEPPYRDEV. The segment covering 216 to 236 has biased composition (low complexity); the sequence is SSNPTSRPSTSSTLPSHPSGS. Composition is skewed to basic and acidic residues over residues 244–264 and 349–360; these read SHPE…FRFP and QETRDKDDHPRS.

It belongs to the MDM12 family. In terms of assembly, component of the ER-mitochondria encounter structure (ERMES) or MDM complex, composed of mmm1, mdm10, mdm12 and mdm34. A mmm1 homodimer associates with one molecule of mdm12 on each side in a pairwise head-to-tail manner, and the SMP-LTD domains of mmm1 and mdm12 generate a continuous hydrophobic tunnel for phospholipid trafficking.

Its subcellular location is the mitochondrion outer membrane. It is found in the endoplasmic reticulum membrane. Its function is as follows. Component of the ERMES/MDM complex, which serves as a molecular tether to connect the endoplasmic reticulum (ER) and mitochondria. Components of this complex are involved in the control of mitochondrial shape and protein biogenesis, and function in nonvesicular lipid trafficking between the ER and mitochondria. Mdm12 is required for the interaction of the ER-resident membrane protein mmm1 and the outer mitochondrial membrane-resident beta-barrel protein mdm10. The mdm12-mmm1 subcomplex functions in the major beta-barrel assembly pathway that is responsible for biogenesis of all mitochondrial outer membrane beta-barrel proteins, and acts in a late step after the SAM complex. The mdm10-mdm12-mmm1 subcomplex further acts in the TOM40-specific pathway after the action of the mdm12-mmm1 complex. Essential for establishing and maintaining the structure of mitochondria and maintenance of mtDNA nucleoids. The chain is Mitochondrial distribution and morphology protein 12 from Aspergillus terreus (strain NIH 2624 / FGSC A1156).